The following is a 458-amino-acid chain: Ammonium transporter Rh type B (458 aa).

Topologically, residues 1 to 13 are cytoplasmic; it reads MAGSPSRAAGRRL. A helical transmembrane segment spans residues 14 to 34; the sequence is QLPLLCLFLQGATAVLFAVFV. Residues 35–61 are Extracellular-facing; the sequence is RYNHKTDAALWHRSNHSNADNEFYFRY. The N-linked (GlcNAc...) asparagine glycan is linked to asparagine 49. The helical transmembrane segment at 62–82 threads the bilayer; it reads PSFQDVHAMVFVGFGFLMVFL. Topologically, residues 83 to 86 are cytoplasmic; the sequence is QRYG. The helical transmembrane segment at 87 to 107 threads the bilayer; it reads FSSVGFTFLLAAFALQWSTLV. Topologically, residues 108–124 are extracellular; that stretch reads QGFLHSFHGGHIHVGVE. The helical transmembrane segment at 125–145 threads the bilayer; that stretch reads SMINADFCAGAVLISFGAVLG. Topologically, residues 146–149 are cytoplasmic; it reads KTGP. A helical membrane pass occupies residues 150–170; that stretch reads AQLLLMALLEVVLFGINEFVL. Residues 171 to 178 lie on the Extracellular side of the membrane; that stretch reads LHLLGVRD. The helical transmembrane segment at 179–201 threads the bilayer; the sequence is AGGSMTIHTFGAYFGLVLSRVLY. Topologically, residues 202 to 219 are cytoplasmic; it reads RPQLEKSKHRQGSVYHSD. Residues 220-240 traverse the membrane as a helical segment; that stretch reads LFTMIGTIFLWIFWPSFNAAL. The Extracellular segment spans residues 241-251; sequence TALGAGQHRTA. A helical membrane pass occupies residues 252–272; sequence LNTYYSLAASTLGTFALSALV. Residues 273–282 are Cytoplasmic-facing; the sequence is GEDGRLDMVH. The helical transmembrane segment at 283 to 303 threads the bilayer; that stretch reads IQNAALTGGVVVGTSSKMMLT. A topological domain (extracellular) is located at residue proline 304. Residues 305–325 form a helical membrane-spanning segment; that stretch reads FGALAAGFLAGTVSTLGYKFF. Topologically, residues 326 to 346 are cytoplasmic; the sequence is TPILESKFKVQDTCGVHNLHG. A helical membrane pass occupies residues 347–367; sequence MPGVLGALLGVLVAGLATHEA. The Extracellular segment spans residues 368-393; the sequence is YGDGLESVFPLIAEGQRSATSQAMHQ. Residues 394 to 414 form a helical membrane-spanning segment; the sequence is LFGLFVTLMFASVGGGLGGLL. At 415–458 the chain is on the cytoplasmic side; that stretch reads LKLPFLDSPPDSQCYEDQVHWQVPGEHEDKAQRPLRVEEADTYA. Residues 416–424 are interaction with ANK3; that stretch reads KLPFLDSPP. Positions 429–432 match the Basolateral sorting signal motif; the sequence is YEDQ. The interval 439–458 is disordered; sequence GEHEDKAQRPLRVEEADTYA.

It belongs to the ammonium transporter (TC 2.A.49) family. Rh subfamily. As to quaternary structure, interacts (via C-terminus) with ANK2 and ANK3; required for targeting to the basolateral membrane. Post-translationally, N-glycosylated.

The protein resides in the cell membrane. It localises to the basolateral cell membrane. It carries out the reaction NH4(+)(in) = NH4(+)(out). It catalyses the reaction methylamine(out) = methylamine(in). The catalysed reaction is CO2(out) = CO2(in). Ammonium transporter involved in the maintenance of acid-base homeostasis. Transports ammonium and its related derivative methylammonium across the basolateral plasma membrane of epithelial cells likely contributing to renal transepithelial ammonia transport and ammonia metabolism. May transport either NH4(+) or NH3 ammonia species predominantly mediating an electrogenic NH4(+) transport. May act as a CO2 channel providing for renal acid secretion. The protein is Ammonium transporter Rh type B (RHBG) of Gorilla gorilla gorilla (Western lowland gorilla).